Reading from the N-terminus, the 712-residue chain is Ribosomal RNA large subunit methyltransferase K/L (712 aa).

The THUMP domain maps to 46–157; it reads GAYQALLHSR…RENMVVSLDL (112 aa).

The protein belongs to the methyltransferase superfamily. RlmKL family.

Its subcellular location is the cytoplasm. It catalyses the reaction guanosine(2445) in 23S rRNA + S-adenosyl-L-methionine = N(2)-methylguanosine(2445) in 23S rRNA + S-adenosyl-L-homocysteine + H(+). The enzyme catalyses guanosine(2069) in 23S rRNA + S-adenosyl-L-methionine = N(2)-methylguanosine(2069) in 23S rRNA + S-adenosyl-L-homocysteine + H(+). Specifically methylates the guanine in position 2445 (m2G2445) and the guanine in position 2069 (m7G2069) of 23S rRNA. The chain is Ribosomal RNA large subunit methyltransferase K/L from Actinobacillus pleuropneumoniae serotype 7 (strain AP76).